We begin with the raw amino-acid sequence, 428 residues long: Histidinol dehydrogenase (428 aa).

Positions 234, 256, and 259 each coordinate substrate. Zn(2+) is bound by residues glutamine 256 and histidine 259. Active-site proton acceptor residues include glutamate 324 and histidine 325. Substrate-binding residues include histidine 325, aspartate 358, glutamate 412, and histidine 417. Aspartate 358 serves as a coordination point for Zn(2+). A Zn(2+)-binding site is contributed by histidine 417.

Belongs to the histidinol dehydrogenase family. It depends on Zn(2+) as a cofactor.

It carries out the reaction L-histidinol + 2 NAD(+) + H2O = L-histidine + 2 NADH + 3 H(+). The protein operates within amino-acid biosynthesis; L-histidine biosynthesis; L-histidine from 5-phospho-alpha-D-ribose 1-diphosphate: step 9/9. Its function is as follows. Catalyzes the sequential NAD-dependent oxidations of L-histidinol to L-histidinaldehyde and then to L-histidine. The polypeptide is Histidinol dehydrogenase (Pelagibacter ubique (strain HTCC1062)).